The following is a 305-amino-acid chain: Axin interactor, dorsalization-associated protein B (305 aa).

Residues 126-137 (ENLEVEEEEEDG) are compositionally biased toward acidic residues. The interval 126–146 (ENLEVEEEEEDGGAGAGSPDL) is disordered. An axin-binding region spans residues 153 to 220 (GTLLPRLPSE…RKEDTYVHFN (68 aa)). In terms of domain architecture, C2 Aida-type spans 156-303 (LPRLPSEPGM…LYLHLLQTLL (148 aa)).

Belongs to the AIDA family.

In terms of biological role, acts as a ventralizing factor during embryogenesis. Inhibits axin-mediated JNK activation by binding axin and disrupting axin homodimerization. This in turn antagonizes a Wnt/beta-catenin-independent dorsalization pathway activated by axin/JNK-signaling. The sequence is that of Axin interactor, dorsalization-associated protein B (aida-b) from Xenopus laevis (African clawed frog).